A 305-amino-acid polypeptide reads, in one-letter code: Thyroxine 5-deiodinase (305 aa).

Residues 1-43 are Cytoplasmic-facing; it reads MPGQAGRRRLVGGGCRGSQGPLGGAATMLRSLLLHSLRLCAQT. Residues 44-63 form a helical; Signal-anchor for type II membrane protein membrane-spanning segment; it reads ASCLVLFPRFLGTACMLWLL. Over 64–305 the chain is Extracellular; that stretch reads DFLCIRKHLL…QLHGPQPRRV (242 aa). The tract at residues 79–98 is disordered; that stretch reads GEPETEVELNSDGDEVPPDD. Residues 82–96 show a composition bias toward acidic residues; it reads ETEVELNSDGDEVPP. Sec-171 is an active-site residue. Residue Sec-171 is a non-standard amino acid, selenocysteine.

This sequence belongs to the iodothyronine deiodinase family. In terms of assembly, monomer. Homodimer. May undergo minor heretodimerization with DIO1 and DIO2. In terms of tissue distribution, expressed in brain only.

Its subcellular location is the cell membrane. It localises to the endosome membrane. It carries out the reaction 3,3',5'-triiodo-L-thyronine + iodide + A + H(+) = L-thyroxine + AH2. The enzyme catalyses 3,3'-diiodo-L-thyronine + iodide + A + H(+) = 3,3',5-triiodo-L-thyronine + AH2. It catalyses the reaction 3-iodo-L-thyronine + iodide + A + H(+) = 3,5-diiodo-L-thyronine + AH2. The catalysed reaction is L-thyronine + iodide + A + H(+) = 3-iodo-L-thyronine + AH2. It carries out the reaction 3',5'-diiodo-L-thyronine + iodide + A + H(+) = 3,3',5'-triiodo-L-thyronine + AH2. The enzyme catalyses 3'-iodo-L-thyronine + iodide + A + H(+) = 3,3'-diiodo-L-thyronine + AH2. It catalyses the reaction 3,3',5'-triiodothyronamine + iodide + A + H(+) = 3,3',5,5'-tetraiodothyronamine + AH2. The catalysed reaction is 3',5'-diiodothyronamine + iodide + A + H(+) = 3,3',5'-triiodothyronamine + AH2. It carries out the reaction 3,3'-diiodothyronamine + iodide + A + H(+) = 3,3',5-triiodothyronamine + AH2. The enzyme catalyses 3-iodothyronamine + iodide + A + H(+) = 3,5-diiodothyronamine + AH2. It catalyses the reaction 3'-iodothyronamine + iodide + A + H(+) = 3,3'-diiodothyronamine + AH2. The catalysed reaction is thyronamine + iodide + A + H(+) = 3-iodothyronamine + AH2. Functionally, plays a crucial role in the metabolism of thyroid hormones (TH) and has specific roles in TH activation and inactivation by deiodination, particularly in different tissues. Catalyzes the deiodination of L-thyroxine (T4) to 3,3',5'-triiodothyronine (rT3), 3,5-diiodothyronine (3,5-T2) to 3-monoiodothyronine (3-T1), rT3 to 3',5'-diiodothyronine (3',5'-T2) and 3,3'-diiodothyronine (3,3'-T2) to 3'-monoiodothyronine (3'-T1) via inner-ring deiodination (IRD). Catalyzes the deiodination of 3,5,3'-triiodothyronine (T3) to 3,3'-diiodothyronine (3,3'-T2) via IRD. Catalyzes the deiodination of 3-T1 to L-thyronine (T0) via outer-ring deiodination (ORD). Catalyzes the tyrosyl ring deiodinations of 3,3',5,5'-tetraiodothyronamine, 3,3',5'-triiodothyronamine, 3,5,3'-triiodothyronamine, 3,5-diiodothyronamine, 3,3'-diiodothyronamine and 3-iodothyronamine. This chain is Thyroxine 5-deiodinase (DIO3), found in Sus scrofa (Pig).